Consider the following 63-residue polypeptide: Frenatin 1.1 (63 aa).

The N-terminal stretch at 1–22 (MAFLKKSLFLVLFLGLVSLSIC) is a signal peptide. The propeptide occupies 23 to 49 (EKEKKEQEDEDENEEEKESEEGSEEKR). The segment at 25–63 (EKKEQEDEDENEEEKESEEGSEEKRGLLDTLGGILGLGR) is disordered. Residues 30–45 (EDEDENEEEKESEEGS) are compositionally biased toward acidic residues. Leu61 is modified (leucine amide).

Expressed by the skin glands.

The protein resides in the secreted. Functionally, antimicrobial peptide with selective activity. Is only active against Micrococcus luteus (MIC=25 ug/ml) and not against Bacillus cereus, Escherichia coli, Leuconostoc mesenteroides, Micrococcus luteus, Pastewella haemolytica, Staphylococcus aureus, Streptococcus faecalis and Streptococcus uberis. This chain is Frenatin 1.1, found in Nyctimystes infrafrenatus (White-lipped tree frog).